The chain runs to 216 residues: Probable nicotinate-nucleotide adenylyltransferase (216 aa).

It belongs to the NadD family.

The catalysed reaction is nicotinate beta-D-ribonucleotide + ATP + H(+) = deamido-NAD(+) + diphosphate. It functions in the pathway cofactor biosynthesis; NAD(+) biosynthesis; deamido-NAD(+) from nicotinate D-ribonucleotide: step 1/1. In terms of biological role, catalyzes the reversible adenylation of nicotinate mononucleotide (NaMN) to nicotinic acid adenine dinucleotide (NaAD). In Geobacter sp. (strain M21), this protein is Probable nicotinate-nucleotide adenylyltransferase.